The chain runs to 1027 residues: Multidrug resistance protein MdtC (1027 aa).

12 helical membrane passes run 16–36 (LLSL…PVAP), 333–353 (EVER…FLFL), 360–380 (LIPA…MYLC), 387–407 (LSLM…IVVL), 431–451 (VGFT…PLLL), 463–483 (FAIT…TLTP), 528–548 (WIMA…ISAP), 853–873 (LILI…LYES), 875–895 (IHPL…LLAL), 897–917 (LFDT…IGIV), 953–973 (PIIM…LSSG), and 984–1004 (ITIV…TPII).

It belongs to the resistance-nodulation-cell division (RND) (TC 2.A.6) family. MdtC subfamily. In terms of assembly, part of a tripartite efflux system composed of MdtA, MdtB and MdtC. MdtC forms a heteromultimer with MdtB.

Its subcellular location is the cell inner membrane. This Proteus mirabilis (strain HI4320) protein is Multidrug resistance protein MdtC.